Reading from the N-terminus, the 401-residue chain is Heat shock transcription factor, Y-linked (401 aa).

Residues 1-11 (MAHVSSETQDV) are compositionally biased toward polar residues. Residues 1-30 (MAHVSSETQDVSPKDELTASEASTRSPLCE) are disordered. Residues 76–194 (LSLNFPRKLW…PQLLVRVKRR (119 aa)) mediate DNA binding.

The protein belongs to the HSF family. In terms of tissue distribution, testis-specific. Present in Sertoli cells and spermatogenic cells (at protein level).

Its subcellular location is the nucleus. The protein resides in the cytoplasm. This chain is Heat shock transcription factor, Y-linked (HSFY1), found in Homo sapiens (Human).